A 471-amino-acid chain; its full sequence is Putative multidrug resistance protein MdtD (471 aa).

Topologically, residues 1-11 (MTDLPDSTRWQ) are periplasmic. Residues 12-32 (LWIVAFGFFMQSLDTTIVNTA) traverse the membrane as a helical segment. Topologically, residues 33–48 (LPSMAQSLGESPLHMH) are cytoplasmic. A helical transmembrane segment spans residues 49–69 (MVIVSYVLTVAVMLPASGWLA). The Periplasmic segment spans residues 70-76 (DKVGVRN). A helical membrane pass occupies residues 77 to 97 (IFFTAIVLFTLGSLFCALSGT). The Cytoplasmic segment spans residues 98–101 (LNEL). The helical transmembrane segment at 102–124 (LLARALQGVGGAMMVPVGRLTVM) threads the bilayer. Over 125–137 (KIVPREQYMAAMT) the chain is Periplasmic. The helical transmembrane segment at 138 to 158 (FVTLPGQVGPLLGPALGGLLV) threads the bilayer. Topologically, residues 159–164 (EYASWH) are cytoplasmic. The helical transmembrane segment at 165–185 (WIFLINIPVGIIGAIATLMLM) threads the bilayer. Topologically, residues 186 to 196 (PNYTMQTRRFD) are periplasmic. The helical transmembrane segment at 197-217 (LSGFLLLAVGMAVLTLALDGS) threads the bilayer. Residues 218-224 (KGTGLSP) are Cytoplasmic-facing. The chain crosses the membrane as a helical span at residues 225 to 245 (LAITGLVAVGVVALVLYLLHA). The Periplasmic segment spans residues 246 to 262 (RNNNRALFSLKLFRTRT). A helical membrane pass occupies residues 263 to 283 (FSLGLAGSFAGRIGSGMLPFM). At 284-285 (TP) the chain is on the cytoplasmic side. Residues 286–306 (VFLQIGLGFSPFHAGLMMIPM) form a helical membrane-spanning segment. Residues 307–341 (VLGSMGMKRIVVQVVNRFGYRRVLVATTLGLSLVT) lie on the Periplasmic side of the membrane. The chain crosses the membrane as a helical span at residues 342-362 (LLFMTTALLGWYYVLPFVLFL). Residues 363 to 395 (QGMVNSTRFSSMNTLTLKDLPDNLASSGNSLLS) are Cytoplasmic-facing. The chain crosses the membrane as a helical span at residues 396-416 (MIMQLSMSIGVTIAGLLLGLF). At 417–430 (GSQHVSVDSSTTQT) the chain is on the periplasmic side. The helical transmembrane segment at 431–451 (VFMYTWLSMAFIIALPAFIFA) threads the bilayer. Over 452–471 (RVPNDTHQNVAISRRKRSAQ) the chain is Cytoplasmic.

Belongs to the major facilitator superfamily. TCR/Tet family.

Its subcellular location is the cell inner membrane. This is Putative multidrug resistance protein MdtD from Escherichia coli O157:H7.